A 183-amino-acid polypeptide reads, in one-letter code: ATP-dependent protease subunit HslV (183 aa).

Thr-13 is an active-site residue. Positions 168, 171, and 174 each coordinate Na(+).

Belongs to the peptidase T1B family. HslV subfamily. In terms of assembly, a double ring-shaped homohexamer of HslV is capped on each side by a ring-shaped HslU homohexamer. The assembly of the HslU/HslV complex is dependent on binding of ATP.

The protein resides in the cytoplasm. It catalyses the reaction ATP-dependent cleavage of peptide bonds with broad specificity.. With respect to regulation, allosterically activated by HslU binding. Functionally, protease subunit of a proteasome-like degradation complex believed to be a general protein degrading machinery. The chain is ATP-dependent protease subunit HslV from Xanthomonas euvesicatoria pv. vesicatoria (strain 85-10) (Xanthomonas campestris pv. vesicatoria).